A 285-amino-acid polypeptide reads, in one-letter code: HTH-type transcriptional activator AmpR (285 aa).

Positions 5–62 (LPLNALRAFEASARHLSFTRAALELCVTQAAVSQQVRILEDRLNRVLFKRLPRGLEMT) constitute an HTH lysR-type domain. The segment at residues 22–41 (FTRAALELCVTQAAVSQQVR) is a DNA-binding region (H-T-H motif).

This sequence belongs to the LysR transcriptional regulatory family.

The protein localises to the cytoplasm. In terms of biological role, this protein is a positive regulator of gene expression of beta-lactamase (AmpC). The polypeptide is HTH-type transcriptional activator AmpR (ampR) (Citrobacter koseri (Citrobacter diversus)).